A 237-amino-acid polypeptide reads, in one-letter code: Purine nucleoside phosphorylase DeoD-type (237 aa).

His5 contacts a purine D-ribonucleoside. Residues Gly21, Arg25, Arg44, and Arg88 to Ser91 each bind phosphate. A purine D-ribonucleoside contacts are provided by residues Glu180–Glu182 and Ser204–Asp205. Residue Asp205 is the Proton donor of the active site.

Belongs to the PNP/UDP phosphorylase family. As to quaternary structure, homohexamer; trimer of homodimers.

It catalyses the reaction a purine D-ribonucleoside + phosphate = a purine nucleobase + alpha-D-ribose 1-phosphate. It carries out the reaction a purine 2'-deoxy-D-ribonucleoside + phosphate = a purine nucleobase + 2-deoxy-alpha-D-ribose 1-phosphate. Catalyzes the reversible phosphorolytic breakdown of the N-glycosidic bond in the beta-(deoxy)ribonucleoside molecules, with the formation of the corresponding free purine bases and pentose-1-phosphate. This is Purine nucleoside phosphorylase DeoD-type from Edwardsiella ictaluri (strain 93-146).